The primary structure comprises 396 residues: Schizokinen exporter SchE (396 aa).

The N-terminal stretch at 1–25 (MLPKLILLATLYISQFIPTTFFIQA) is a signal peptide. Over 26 to 39 (LPVFMRQQKMSLDV) the chain is Cytoplasmic. Residues 40-60 (IGFLGLLILPSGLKFLWSPFI) traverse the membrane as a helical segment. Residues 61 to 73 (DRYRLGKLGHYRG) lie on the Periplasmic side of the membrane. Residues 74–94 (WIICFQLLLISTMLVTAFIDI) traverse the membrane as a helical segment. Residues 95-104 (QDNLNAFLTC) are Cytoplasmic-facing. A helical membrane pass occupies residues 105–127 (MFLASLFSSSQDIATDALAVNLL). Residues 128–137 (EPQERGLGNA) lie on the Periplasmic side of the membrane. The helical transmembrane segment at 138 to 158 (IQSGGNIFGAIIGGGVMLILL) threads the bilayer. At 159-162 (DKIG) the chain is on the cytoplasmic side. A helical membrane pass occupies residues 163 to 183 (WRYSLITLSIFMLINLVPILI). The Periplasmic segment spans residues 184–214 (YREKSQHQLENSTFFRSYFQPFISFLSRPKA). A helical membrane pass occupies residues 215 to 235 (LPWLFVVLLYMMGDSVTSLMI). The Cytoplasmic segment spans residues 236–251 (RPLLVDRGLSLPDIGW). The chain crosses the membrane as a helical span at residues 252-272 (ILGIVSYSARIVSALIAGLVI). The Periplasmic portion of the chain corresponds to 273 to 281 (VKLGRIKSL). The chain crosses the membrane as a helical span at residues 282–302 (IIFGFIADLTTLLYIIPAIGV). Topologically, residues 303-304 (SS) are cytoplasmic. A helical transmembrane segment spans residues 305-325 (LLVLYTVCIIVNATQSMAYTA). The Periplasmic segment spans residues 326–346 (LLSAMMDKCEKNTAATDYTMQ). Helical transmembrane passes span 347–367 (VSVMFLGGIAATVLSGMLATT) and 368–388 (MGYSFIFIMSAAVSLLSVFLI). Over 389–396 (TQEYGVSS) the chain is Periplasmic.

It belongs to the major facilitator superfamily.

Its subcellular location is the cell inner membrane. Involved in the TolC-like protein HgdD-dependent secretion of schizokinen, a dihydroxamate-type siderophore. Transports schizokinen from the cytoplasm to the periplasm. The sequence is that of Schizokinen exporter SchE from Nostoc sp. (strain PCC 7120 / SAG 25.82 / UTEX 2576).